Consider the following 478-residue polypeptide: Transcript termination protein A18 (478 aa).

Positions 98–254 (KLSTHRPMYM…NDVVNVLKVS (157 aa)) constitute a Helicase ATP-binding domain. ATP is bound at residue 111–118 (LSCGFGKT). Positions 204-207 (DESH) match the DESH box motif. The 167-residue stretch at 302-468 (PRNNLIVETV…GIEGTKEEPV (167 aa)) folds into the Helicase C-terminal domain.

This sequence belongs to the helicase family. Poxviruses subfamily. As to quaternary structure, interacts with G2. Might be part of a transcription complex composed at least of G2, A18, and H5.

It is found in the virion. Functionally, DNA helicase which seems to act as a postreplicative transcription termination factor. Involved in ATP-dependent release of nascent RNA. Forms a stable complex with single-stranded DNA, and to a lesser extent RNA. The chain is Transcript termination protein A18 from Rabbit fibroma virus (strain Kasza) (RFV).